Here is a 346-residue protein sequence, read N- to C-terminus: HLA class I histocompatibility antigen, alpha chain F (346 aa).

A signal peptide spans 1–21 (MAPRSLLLLLSGALALTDTWA). Positions 22 to 111 (GSHSLRYFST…LLRRYNQSEA (90 aa)) are alpha-1. Residues 22–305 (GSHSLRYFST…EQSPQPTIPI (284 aa)) are Extracellular-facing. 2 residues coordinate a peptide antigen: N91 and R105. An N-linked (GlcNAc...) asparagine glycan is attached at N107. The alpha-2 stretch occupies residues 112–203 (GSHTLQGMNG…ENGKETLQRA (92 aa)). Disulfide bonds link C122/C185 and C224/C280. Positions 164, 168, and 176 each coordinate a peptide antigen. The segment at 204-295 (DPPKAHVAHH…GLPQPLILRW (92 aa)) is alpha-3. Positions 206–296 (PKAHVAHHPI…LPQPLILRWE (91 aa)) constitute an Ig-like C1-type domain. The segment at 296–305 (EQSPQPTIPI) is connecting peptide. Residues 306-329 (VGIVAGLVVLGAVVTGAVVAAVMW) traverse the membrane as a helical segment. The Cytoplasmic segment spans residues 330–346 (RKKSSDRNRGSYSQAAV). The Sorting signal sequence; Golgi-retention signal; ER-retention signal motif lies at 336–338 (RNR).

It belongs to the MHC class I family. As to quaternary structure, forms a heterotrimer with B2M and a self-peptide. Binds a diverse number of peptides ranging from 7 to more than 30 amino acids. Peptide-bound HLA-F-B2M interacts with LILRB1 and LILRB2 but not with KIR3DS1 or KIR3DL2; this interaction is direct. The OC form interacts with KIR3DS1, KIR2DS4 and KIR3DL2; this interaction is direct. Interacts with TAP1-TAP2 complex and CALR; this interaction is required for appropriate folding and peptide loading. Interacts with the coat protein complex II and 14-3-3 proteins; these interactions likely control the anterograde ER-to-Golgi transport of HLA-F. HLA-F-B2M complex interacts with the heavy chain of other MHC class I molecules including HLA-A and HLA-E; this interaction may regulate the intracellular trafficking and the stability of peptide-free MHC class I OCs. N-glycosylated. In terms of tissue distribution, expressed in resting B cells (at protein level). Expressed in secondary lymphoid organs rich in B and T cells such as the tonsils, spleen, and thymus (at protein level). Expressed in the endothelial cells of the tonsils. Expressed on activated lymphoid cells including B cells, NK cells, CD4+ T cells and memory T cells (at protein level). Expressed in motor neurons of spinal cord.

The protein resides in the cell membrane. It localises to the early endosome membrane. Its subcellular location is the lysosome membrane. Its function is as follows. Non-classical major histocompatibility class Ib molecule postulated to play a role in immune surveillance, immune tolerance and inflammation. Functions in two forms, as a heterotrimeric complex with B2M/beta-2 microglobulin and a peptide (peptide-bound HLA-F-B2M) and as an open conformer (OC) devoid of peptide and B2M (peptide-free OC). In complex with B2M, presents non-canonical self-peptides carrying post-translational modifications, particularly phosphorylated self-peptides. Peptide-bound HLA-F-B2M acts as a ligand for LILRB1 inhibitory receptor, a major player in maternal-fetal tolerance. Peptide-free OC acts as a ligand for KIR3DS1 and KIR3DL2 receptors. Upon interaction with activating KIR3DS1 receptor on NK cells, triggers NK cell degranulation and anti-viral cytokine production. Through interaction with KIR3DL2 receptor, inhibits NK and T cell effector functions. May interact with other MHC class I OCs to cross-present exogenous viral, tumor or minor histompatibility antigens to cytotoxic CD8+ T cells, triggering effector and memory responses. May play a role in inflammatory responses in the peripheral nervous system. Through interaction with KIR3DL2, may protect motor neurons from astrocyte-induced toxicity. In Homo sapiens (Human), this protein is HLA class I histocompatibility antigen, alpha chain F.